The following is a 107-amino-acid chain: MGNLMSLVLVALLFSLSLAVIADTSNDATHVKEEVKPSTEATDAIEAEVEVNDAVVEPQQGLPGGGCRFGCCGGYWWNGLCIYCCRSQAEANEVVKTVEPQKEEAKP.

Positions Met-1–Ala-19 are cleaved as a signal peptide.

In terms of biological role, may be involved in the acquisition of desiccation tolerance during late phase of embryogenesis. In Arabidopsis thaliana (Mouse-ear cress), this protein is Late embryogenesis abundant protein M10.